The following is a 688-amino-acid chain: Protein sel-1 homolog 2 (688 aa).

The N-terminal stretch at 1–18 (MNPLALLVEILIIIEVTT) is a signal peptide. The Extracellular portion of the chain corresponds to 19 to 662 (KNTEAERYNR…KWKWLKLDST (644 aa)). N-linked (GlcNAc...) asparagine glycosylation is present at asparagine 34. 11 Sel1-like repeats span residues 107–142 (GDEL…NMGN), 143–178 (LKAM…KEGS), 179–214 (YKAQ…AGGS), 215–250 (MMSQ…DYIA), 297–333 (VQIQ…KAGS), 334–370 (ANAM…SKGN), 371–406 (AIGL…EKGW), 407–442 (PNAQ…QSGQ), 443–478 (PLAI…ELGH), 551–586 (AFAR…DKHH), and 588–623 (AQAM…QTSP). Residue asparagine 162 is glycosylated (N-linked (GlcNAc...) asparagine). The helical transmembrane segment at 663–683 (VGPYWDLLVIGLIVAMLIFLL) threads the bilayer. Residues 684–688 (RNRHR) are Cytoplasmic-facing.

This sequence belongs to the sel-1 family.

The protein resides in the membrane. It is found in the cell projection. Its subcellular location is the cilium. It localises to the nucleus speckle. This is Protein sel-1 homolog 2 (Sel1l2) from Mus musculus (Mouse).